The primary structure comprises 268 residues: Putative ABC transporter ATP-binding protein MK0182 (268 aa).

The region spanning 1–229 (MTHEYPDGTC…VDLIRESGLK (229 aa)) is the ABC transporter domain. 29-36 (GPNGSGKT) contacts ATP.

The protein belongs to the ABC transporter superfamily.

It localises to the cell membrane. Its function is as follows. Probably part of an ABC transporter complex. Responsible for energy coupling to the transport system. The protein is Putative ABC transporter ATP-binding protein MK0182 of Methanopyrus kandleri (strain AV19 / DSM 6324 / JCM 9639 / NBRC 100938).